The following is a 404-amino-acid chain: Cysteine desulfurase IscS (404 aa).

Pyridoxal 5'-phosphate is bound by residues 75 to 76 (AT), Asn155, Gln183, and 203 to 205 (SAH). Lys206 carries the N6-(pyridoxal phosphate)lysine modification. Pyridoxal 5'-phosphate is bound at residue Thr243. The active-site Cysteine persulfide intermediate is the Cys328. Residue Cys328 participates in [2Fe-2S] cluster binding.

This sequence belongs to the class-V pyridoxal-phosphate-dependent aminotransferase family. NifS/IscS subfamily. As to quaternary structure, homodimer. Forms a heterotetramer with IscU, probably interacts with other sulfur acceptors. Requires pyridoxal 5'-phosphate as cofactor.

Its subcellular location is the cytoplasm. The enzyme catalyses (sulfur carrier)-H + L-cysteine = (sulfur carrier)-SH + L-alanine. Its pathway is cofactor biosynthesis; iron-sulfur cluster biosynthesis. With respect to regulation, inhibited by equimolar N-iodoacetyl-N'-(5-sulfo-1-naphthyl)ethylenediamine. In terms of biological role, master enzyme that delivers sulfur to a number of partners involved in Fe-S cluster assembly, tRNA modification or cofactor biosynthesis. Catalyzes the removal of elemental sulfur from cysteine to produce alanine via an enzyme-bound persulfide intermediate. Functions as a sulfur delivery protein for Fe-S cluster synthesis. Cluster assembly on IscU homodimers proceeds sequentially from 1 2Fe-2S per dimer, to 2 2Fe-2S per dimer and finally 1 4Fe-4S per dimer. The protein is Cysteine desulfurase IscS of Azotobacter vinelandii.